We begin with the raw amino-acid sequence, 632 residues long: Threonine--tRNA ligase (632 aa).

The TGS domain maps to 1–59 (MIRITFLAKQKVEEYSSRVTGFDILQPDISKEAIALRVNGELYDLSREIESDTEIDVIQ). A catalytic region spans residues 240–532 (DHRRIAKDMD…LIEHYAGKFP (293 aa)). Residues cysteine 332, histidine 383, and histidine 509 each coordinate Zn(2+).

This sequence belongs to the class-II aminoacyl-tRNA synthetase family. In terms of assembly, homodimer. Requires Zn(2+) as cofactor.

Its subcellular location is the cytoplasm. The catalysed reaction is tRNA(Thr) + L-threonine + ATP = L-threonyl-tRNA(Thr) + AMP + diphosphate + H(+). Its function is as follows. Catalyzes the attachment of threonine to tRNA(Thr) in a two-step reaction: L-threonine is first activated by ATP to form Thr-AMP and then transferred to the acceptor end of tRNA(Thr). Also edits incorrectly charged L-seryl-tRNA(Thr). This is Threonine--tRNA ligase from Wolbachia sp. subsp. Brugia malayi (strain TRS).